Consider the following 325-residue polypeptide: Thioredoxin reductase (325 aa).

FAD contacts are provided by residues 10 to 13 (SGPS), 39 to 40 (IA), glutamine 44, asparagine 53, valine 86, cysteine 143, aspartate 286, and 293 to 295 (RQA). The cysteines at positions 140 and 143 are disulfide-linked.

Belongs to the class-II pyridine nucleotide-disulfide oxidoreductase family. Homodimer. FAD serves as cofactor.

It localises to the cytoplasm. The catalysed reaction is [thioredoxin]-dithiol + NADP(+) = [thioredoxin]-disulfide + NADPH + H(+). This chain is Thioredoxin reductase (TRR1), found in Pneumocystis carinii.